A 282-amino-acid polypeptide reads, in one-letter code: MQEIFLCSISNVRSGDCKEDCAYCTQSSHHQGAIKRYKFKDEKVVLQEARALRELGALGFCLVTSGRELDDEKCEYIAKLAKAINQEELGLHLIACCGRADLEQLEFLRDAGIHSYNHNLETSQNFFPKICSTHTWEERFITCENALRAGLGLCSGGIFGLNESWEDRIEMLRALASLSPHTTPINFFIKNPVLPIDTETLSADEALECVLLAKEFLPNARLMVAGGREVVFKDNDKKEAKLFEYGINAVVLGDYLTTKGKAPKKDIEKLLSYGLTMATSCH.

Residues 1–228 (MQEIFLCSIS…NARLMVAGGR (228 aa)) form the Radical SAM core domain. The [4Fe-4S] cluster site is built by C17, C21, and C24. [2Fe-2S] cluster contacts are provided by C61, C96, C154, and R221.

It belongs to the radical SAM superfamily. Biotin synthase family. As to quaternary structure, homodimer. Requires [4Fe-4S] cluster as cofactor. It depends on [2Fe-2S] cluster as a cofactor.

It carries out the reaction (4R,5S)-dethiobiotin + (sulfur carrier)-SH + 2 reduced [2Fe-2S]-[ferredoxin] + 2 S-adenosyl-L-methionine = (sulfur carrier)-H + biotin + 2 5'-deoxyadenosine + 2 L-methionine + 2 oxidized [2Fe-2S]-[ferredoxin]. The protein operates within cofactor biosynthesis; biotin biosynthesis; biotin from 7,8-diaminononanoate: step 2/2. Functionally, catalyzes the conversion of dethiobiotin (DTB) to biotin by the insertion of a sulfur atom into dethiobiotin via a radical-based mechanism. This is Biotin synthase from Helicobacter pylori (strain Shi470).